Consider the following 388-residue polypeptide: Succinate--CoA ligase [ADP-forming] subunit beta (388 aa).

The region spanning 9 to 244 (KEILRKYGVT…LDEEDPAEIE (236 aa)) is the ATP-grasp domain. ATP contacts are provided by residues K46, 53–55 (GRG), E99, A102, and E107. Mg(2+)-binding residues include N199 and D213. Substrate-binding positions include N264 and 321-323 (GIM).

Belongs to the succinate/malate CoA ligase beta subunit family. As to quaternary structure, heterotetramer of two alpha and two beta subunits. Mg(2+) serves as cofactor.

It carries out the reaction succinate + ATP + CoA = succinyl-CoA + ADP + phosphate. The catalysed reaction is GTP + succinate + CoA = succinyl-CoA + GDP + phosphate. It participates in carbohydrate metabolism; tricarboxylic acid cycle; succinate from succinyl-CoA (ligase route): step 1/1. Succinyl-CoA synthetase functions in the citric acid cycle (TCA), coupling the hydrolysis of succinyl-CoA to the synthesis of either ATP or GTP and thus represents the only step of substrate-level phosphorylation in the TCA. The beta subunit provides nucleotide specificity of the enzyme and binds the substrate succinate, while the binding sites for coenzyme A and phosphate are found in the alpha subunit. The sequence is that of Succinate--CoA ligase [ADP-forming] subunit beta from Herminiimonas arsenicoxydans.